The primary structure comprises 37 residues: Chitinase-like protein (37 aa).

The tract at residues 1 to 20 (VLLSVGGDADTESPEKKNLG) is disordered. Residues 1–37 (VLLSVGGDADTESPEKKNLGGVSIVDLSMDDFRGLLT) enclose the GH18 domain.

This sequence belongs to the glycosyl hydrolase 18 family. IDGF subfamily. In terms of processing, glycosylated.

The protein localises to the secreted. In terms of biological role, cooperates with insulin-like peptides to stimulate the proliferation, polarization and motility of imaginal disk cells. May act by stabilizing the binding of insulin-like peptides to its receptor through a simultaneous interaction with both molecules to form a multiprotein signaling complex. This Heliothis virescens (Tobacco budworm moth) protein is Chitinase-like protein.